The sequence spans 212 residues: Urease accessory protein UreG (212 aa).

Glycine 19 to threonine 26 serves as a coordination point for GTP.

The protein belongs to the SIMIBI class G3E GTPase family. UreG subfamily. Homodimer. UreD, UreF and UreG form a complex that acts as a GTP-hydrolysis-dependent molecular chaperone, activating the urease apoprotein by helping to assemble the nickel containing metallocenter of UreC. The UreE protein probably delivers the nickel.

Its subcellular location is the cytoplasm. In terms of biological role, facilitates the functional incorporation of the urease nickel metallocenter. This process requires GTP hydrolysis, probably effectuated by UreG. The sequence is that of Urease accessory protein UreG from Vibrio parahaemolyticus.